A 222-amino-acid chain; its full sequence is Kunitz trypsin inhibitor 3 (222 aa).

The N-terminal stretch at 1–23 is a signal peptide; it reads MEKLTLSFITLTVLSAIFTAASA. Residue Asn-65 is glycosylated (N-linked (GlcNAc...) asparagine). 2 disulfide bridges follow: Cys-72-Cys-119 and Cys-165-Cys-173. Residue Asn-175 is glycosylated (N-linked (GlcNAc...) asparagine).

This sequence belongs to the protease inhibitor I3 (leguminous Kunitz-type inhibitor) family.

In terms of biological role, exhibits Kunitz trypsin protease inhibitor activity. The sequence is that of Kunitz trypsin inhibitor 3 from Arabidopsis thaliana (Mouse-ear cress).